The sequence spans 185 residues: Threonylcarbamoyl-AMP synthase (185 aa).

Positions 1–185 constitute a YrdC-like domain; it reads MDNLQQVVSA…AFSDTVLRQG (185 aa).

This sequence belongs to the SUA5 family. TsaC subfamily.

Its subcellular location is the cytoplasm. It catalyses the reaction L-threonine + hydrogencarbonate + ATP = L-threonylcarbamoyladenylate + diphosphate + H2O. Functionally, required for the formation of a threonylcarbamoyl group on adenosine at position 37 (t(6)A37) in tRNAs that read codons beginning with adenine. Catalyzes the conversion of L-threonine, HCO(3)(-)/CO(2) and ATP to give threonylcarbamoyl-AMP (TC-AMP) as the acyladenylate intermediate, with the release of diphosphate. The chain is Threonylcarbamoyl-AMP synthase from Photobacterium profundum (strain SS9).